Consider the following 438-residue polypeptide: Coenzyme A disulfide reductase (438 aa).

Residue 8-33 (GAVAGGATCASQIRRLDKESDIIIFE) coordinates FAD. 5 residues coordinate substrate: Thr15, Gln19, Arg22, Ser39, and Asn42. Cys43 (nucleophile) is an active-site residue. Cys43 serves as the catalytic Redox-active. Substrate is bound at residue Lys71. NADP(+) is bound at residue 151 to 166 (VLVVGAGYVSLEVLEN). Residue 267–277 (TNVPNIYAIGD) coordinates FAD. Position 299 (His299) interacts with substrate. Tyr419 is a binding site for FAD. Lys427 is a binding site for substrate.

Belongs to the class-III pyridine nucleotide-disulfide oxidoreductase family. As to quaternary structure, homodimer. FAD is required as a cofactor.

The enzyme catalyses NADP(+) + 2 CoA = CoA-disulfide + NADPH + H(+). Its function is as follows. Catalyzes specifically the NADPH-dependent reduction of coenzyme A disulfide. In Staphylococcus aureus (strain COL), this protein is Coenzyme A disulfide reductase.